Reading from the N-terminus, the 408-residue chain is Multidrug resistance protein MdtG (408 aa).

11 consecutive transmembrane segments (helical) span residues 16–36 (LIVA…VMPF), 58–78 (IVFS…GGLA), 92–112 (LGMG…QFLI), 115–135 (ALLG…ATQV), 146–166 (TLST…GLLA), 173–193 (PVFF…LFCI), 224–244 (LFVT…ILTL), 256–276 (VAFI…LSAP), 290–310 (ILIT…YVQT), 319–339 (FLLG…LVYN), and 378–398 (AVFL…WNSL).

It belongs to the major facilitator superfamily. DHA1 family. MdtG (TC 2.A.1.2.20) subfamily.

Its subcellular location is the cell inner membrane. Functionally, confers resistance to fosfomycin and deoxycholate. This Escherichia coli O6:K15:H31 (strain 536 / UPEC) protein is Multidrug resistance protein MdtG.